A 57-amino-acid chain; its full sequence is High light-inducible protein HliD (57 aa).

A Chlorophyll-binding motif motif is present at residues 25–30; that stretch reads EKLNGR. Residues 25–46 traverse the membrane as a helical segment; that stretch reads EKLNGRAAMVGFLLILVIEYFT.

Belongs to the Hlip family. As to quaternary structure, probably forms dimers which bind 6 chlorophyll a and 2 beta-carotenoid molecules. Cofractionates in an approximately 50 kDa fraction of the thylakoid membrane with HliC. Does not associate with mature PSII. Purified in several chlorophyll- and carotenoid-containing complexes, including photosystem II (PSII) assembly intermediate complex RCII* (iD1, D1, D2, PsbE, PsbF, PsbI, Ycf39, Ycf48, HliC and HliD) and the Ycf39-Hlip complex (Ycf39, HliC, HliD and pigments).

The protein localises to the cellular thylakoid membrane. Involved in photosystem II (PSII) assembly and/or repair under high light stress. Required for binding of chlorophyll and carotenoids by the Ycf39-Hlip complex. The Ycf39-Hlip complex binds D1 at an early stage of PSII assembly along with Ycf48, ribosomes and ChlG, the last enzyme in chlorophyll biosynthesis; it may be involved in chlorophyll reuse and delivery to D1 in the initial stages of PSII assembly. Binds chlorophyll a and beta-carotenoid in a 3:1 stoichiometry in the presence and absence of Yfc39; in the Ycf39-HliC-HliD complex, HliD binds all the pigment. The Ycf39-Hlip complex efficiently quenches chlorophyll fluorescence, contributing to photoprotection. Deletion of 4 to 5 members of the Hlip family suggests the proteins are involved in regulation of chlorophyll biosynthesis, in stabilization of chlorophyll-binding proteins and/or in reuse of chlorophylls, and may regulate tetrapyrrole biosynthesis. Might bind chlorophyll and/or carotenoids in association with HliC (called the ScpBE pair). Its function is as follows. The Hlips might regulate tetrapyrrole biosynthesis, maybe at the level of aminolevulinic acid synthesis and probably stabilize PSII assembly intermediates. This Synechocystis sp. (strain ATCC 27184 / PCC 6803 / Kazusa) protein is High light-inducible protein HliD (hliD).